The following is a 1035-amino-acid chain: Condensin complex subunit 3 (1035 aa).

HEAT repeat units follow at residues 113-150 and 153-191; these read RFVD…NIGE and ESLF…EEQT. S198 is modified (phosphoserine). The HEAT 3 repeat unit spans residues 201–239; that stretch reads EENFEATRTLVASIQNDPSAEVRRAAMLNLINDNNTRPY. Residues 500–536 form a disordered region; it reads EEKIKSKKINRRNETSVDEEDENGTHNDEVNEDEEDD. HEAT repeat units follow at residues 597 to 635 and 827 to 864; these read ILIA…LDVK and VQLT…SSEQ. Residues 909 to 919 are compositionally biased toward basic and acidic residues; it reads ERSETQTKDEN. 2 disordered regions span residues 909–934 and 959–995; these read ERSE…GNSF and TTVN…LENM. Composition is skewed to polar residues over residues 920-934 and 959-973; these read NTAN…GNSF and TTVN…TEQS. S933 bears the Phosphoserine mark. S981 is modified (phosphoserine). Residues 986 to 995 are compositionally biased toward polar residues; it reads IDTSKNLENM. S1008 is modified (phosphoserine). The tract at residues 1012–1035 is disordered; sequence PDEKSDAMSIDEEDKDSESFSEVC.

Belongs to the CND3 (condensin subunit 3) family. Component of the condensin complex, which contains the SMC2 and SMC4 heterodimer, and three non SMC subunits that probably regulate the complex: BRN1, YCS4 and YCG1/YCS5.

The protein resides in the nucleus. The protein localises to the cytoplasm. Its subcellular location is the chromosome. Regulatory subunit of the condensin complex, a complex required for conversion of interphase chromatin into mitotic-like condense chromosomes. The condensin complex probably introduces positive supercoils into relaxed DNA in the presence of type I topoisomerases and converts nicked DNA into positive knotted forms in the presence of type II topoisomerases. The condensin complex probably also plays a role during interphase. In Saccharomyces cerevisiae (strain ATCC 204508 / S288c) (Baker's yeast), this protein is Condensin complex subunit 3 (YCG1).